The chain runs to 196 residues: tRNA(Phe) 7-((3-amino-3-carboxypropyl)-4-demethylwyosine(37)-N(4))-methyltransferase (196 aa).

It belongs to the TYW3 family.

The catalysed reaction is 4-demethyl-7-[(3S)-3-amino-3-carboxypropyl]wyosine(37) in tRNA(Phe) + S-adenosyl-L-methionine = 7-[(3S)-3-amino-3-carboxypropyl]wyosine(37) in tRNA(Phe) + S-adenosyl-L-homocysteine + H(+). S-adenosyl-L-methionine-dependent methyltransferase that acts as a component of the wyosine derivatives biosynthesis pathway. Probably methylates N-4 position of wybutosine-86 to produce wybutosine-72. This chain is tRNA(Phe) 7-((3-amino-3-carboxypropyl)-4-demethylwyosine(37)-N(4))-methyltransferase, found in Archaeoglobus fulgidus (strain ATCC 49558 / DSM 4304 / JCM 9628 / NBRC 100126 / VC-16).